The sequence spans 175 residues: MQIKSRIRTIAHYPHEGIMFRDITTLLKDPVGLRATIQEIASRYKSMKIDKVAGIESRGFIIGAPVAYELGVGFVPVRKKGKLPAETRGRDYQLEYGSDRIEIHVDAIQKGDRVLLVDDLIATGGTAEAAAGLIHEMGGEVVECSFVIDLPDIGGRARLEDQGLKVFALCEFEGN.

Belongs to the purine/pyrimidine phosphoribosyltransferase family. As to quaternary structure, homodimer.

Its subcellular location is the cytoplasm. It catalyses the reaction AMP + diphosphate = 5-phospho-alpha-D-ribose 1-diphosphate + adenine. Its pathway is purine metabolism; AMP biosynthesis via salvage pathway; AMP from adenine: step 1/1. In terms of biological role, catalyzes a salvage reaction resulting in the formation of AMP, that is energically less costly than de novo synthesis. In Nitrosospira multiformis (strain ATCC 25196 / NCIMB 11849 / C 71), this protein is Adenine phosphoribosyltransferase.